The primary structure comprises 296 residues: Glycine N-acyltransferase (296 aa).

Residues Lys16, Lys127, and Lys141 each carry the N6-acetyllysine; alternate modification. N6-succinyllysine; alternate is present on residues Lys16, Lys127, and Lys141. The residue at position 159 (Lys159) is an N6-acetyllysine. Residue Lys169 is modified to N6-succinyllysine. 2 positions are modified to N6-acetyllysine; alternate: Lys183 and Lys256. N6-succinyllysine; alternate occurs at positions 183 and 256.

The protein belongs to the glycine N-acyltransferase family. As to expression, predominantly expressed in liver (at protein level) and kidney. Down-regulated in hepatocellular carcinoma and other liver cancers.

Its subcellular location is the mitochondrion. It catalyses the reaction an acyl-CoA + glycine = an N-acylglycine + CoA + H(+). The enzyme catalyses benzoyl-CoA + glycine = N-benzoylglycine + CoA + H(+). Functionally, mitochondrial acyltransferase which transfers an acyl group to the N-terminus of glycine and glutamine, although much less efficiently. Can conjugate numerous substrates to form a variety of N-acylglycines, with a preference for benzoyl-CoA over phenylacetyl-CoA as acyl donors. Thereby detoxify xenobiotics, such as benzoic acid or salicylic acid, and endogenous organic acids, such as isovaleric acid. The sequence is that of Glycine N-acyltransferase (GLYAT) from Homo sapiens (Human).